The chain runs to 235 residues: Phosphoribosylaminoimidazole-succinocarboxamide synthase (235 aa).

Belongs to the SAICAR synthetase family.

It carries out the reaction 5-amino-1-(5-phospho-D-ribosyl)imidazole-4-carboxylate + L-aspartate + ATP = (2S)-2-[5-amino-1-(5-phospho-beta-D-ribosyl)imidazole-4-carboxamido]succinate + ADP + phosphate + 2 H(+). Its pathway is purine metabolism; IMP biosynthesis via de novo pathway; 5-amino-1-(5-phospho-D-ribosyl)imidazole-4-carboxamide from 5-amino-1-(5-phospho-D-ribosyl)imidazole-4-carboxylate: step 1/2. In Clostridium acetobutylicum (strain ATCC 824 / DSM 792 / JCM 1419 / IAM 19013 / LMG 5710 / NBRC 13948 / NRRL B-527 / VKM B-1787 / 2291 / W), this protein is Phosphoribosylaminoimidazole-succinocarboxamide synthase.